Consider the following 189-residue polypeptide: Protein GrpE (189 aa).

The segment at 1-22 (MKEQQKETEQNIEEINDETVTE) is disordered. A compositionally biased stretch (acidic residues) spans 10-22 (QNIEEINDETVTE).

Belongs to the GrpE family. Homodimer.

It localises to the cytoplasm. Functionally, participates actively in the response to hyperosmotic and heat shock by preventing the aggregation of stress-denatured proteins, in association with DnaK and GrpE. It is the nucleotide exchange factor for DnaK and may function as a thermosensor. Unfolded proteins bind initially to DnaJ; upon interaction with the DnaJ-bound protein, DnaK hydrolyzes its bound ATP, resulting in the formation of a stable complex. GrpE releases ADP from DnaK; ATP binding to DnaK triggers the release of the substrate protein, thus completing the reaction cycle. Several rounds of ATP-dependent interactions between DnaJ, DnaK and GrpE are required for fully efficient folding. The sequence is that of Protein GrpE from Leuconostoc citreum (strain KM20).